A 210-amino-acid polypeptide reads, in one-letter code: Uridine kinase (210 aa).

ATP is bound at residue 12 to 19; the sequence is GGSGGGKT.

The protein belongs to the uridine kinase family.

It is found in the cytoplasm. The catalysed reaction is uridine + ATP = UMP + ADP + H(+). The enzyme catalyses cytidine + ATP = CMP + ADP + H(+). It participates in pyrimidine metabolism; CTP biosynthesis via salvage pathway; CTP from cytidine: step 1/3. Its pathway is pyrimidine metabolism; UMP biosynthesis via salvage pathway; UMP from uridine: step 1/1. This Streptococcus uberis (strain ATCC BAA-854 / 0140J) protein is Uridine kinase.